Here is a 205-residue protein sequence, read N- to C-terminus: Small ribosomal subunit protein uS5 (205 aa).

The S5 DRBM domain occupies 49–112 (LVDEVLCIDM…TNAKLNIVKV (64 aa)).

This sequence belongs to the universal ribosomal protein uS5 family. In terms of assembly, part of the 30S ribosomal subunit. Contacts protein S4.

Its function is as follows. With S4 and S12 plays an important role in translational accuracy. This Methanocorpusculum labreanum (strain ATCC 43576 / DSM 4855 / Z) protein is Small ribosomal subunit protein uS5.